Consider the following 382-residue polypeptide: Glutamyl-tRNA reductase (382 aa).

Substrate is bound by residues 38–41 (TCNR), serine 85, 90–92 (ENQ), and glutamine 96. Catalysis depends on cysteine 39, which acts as the Nucleophile. 164 to 169 (GAGEMG) is an NADP(+) binding site.

This sequence belongs to the glutamyl-tRNA reductase family. Homodimer.

The catalysed reaction is (S)-4-amino-5-oxopentanoate + tRNA(Glu) + NADP(+) = L-glutamyl-tRNA(Glu) + NADPH + H(+). It functions in the pathway porphyrin-containing compound metabolism; protoporphyrin-IX biosynthesis; 5-aminolevulinate from L-glutamyl-tRNA(Glu): step 1/2. Functionally, catalyzes the NADPH-dependent reduction of glutamyl-tRNA(Glu) to glutamate 1-semialdehyde (GSA). The polypeptide is Glutamyl-tRNA reductase (Methanococcus maripaludis (strain C6 / ATCC BAA-1332)).